The sequence spans 478 residues: Odorant receptor coreceptor (478 aa).

The Cytoplasmic segment spans residues 1 to 43; sequence MNVQPTKYHGLVLDLMPNIRLMQGFGHFLFRYVNGPVLIRKLY. The chain crosses the membrane as a helical span at residues 44 to 64; the sequence is SWWNLIMILLQYFAIMGNLVM. Over 65–73 the chain is Extracellular; the sequence is NTGDVNELT. The chain crosses the membrane as a helical span at residues 74 to 94; sequence ANTITTLFFTHSVTKFIYVAV. At 95 to 133 the chain is on the cytoplasmic side; it reads NSEHFYRTLGIWNQPNSHSLFAESDARYHSIALAKMRKL. The chain crosses the membrane as a helical span at residues 134 to 154; the sequence is LVMVMVTTVLSVVAWITITFF. Over 155–187 the chain is Extracellular; sequence GDSVKNVFDKETNETYTVEIPRLPIKAWYPWDA. A glycan (N-linked (GlcNAc...) asparagine) is linked at asparagine 167. The helical transmembrane segment at 188-208 threads the bilayer; sequence MSGVPYFFSFIYQAYFLLFSM. Over 209–343 the chain is Cytoplasmic; that stretch reads CQANLADVMF…VERHKHVVRL (135 aa). The helical transmembrane segment at 344 to 364 threads the bilayer; it reads VSAIGETYGAALLLHMLTSTI. Over 365–382 the chain is Extracellular; the sequence is KLTLLAYQATKIDALNVY. A helical membrane pass occupies residues 383–403; that stretch reads GLTVIGYLVYALAQVFLFCIF. Topologically, residues 404–454 are cytoplasmic; that stretch reads GNRLIEESSSVMEAAYSCHWYDGSEEAKTFVQIVCQQCQKAMTISGAKFFT. Residues 455–475 traverse the membrane as a helical segment; that stretch reads VSLDLFASVLGAVVTYFMVLV. Topologically, residues 476-478 are extracellular; the sequence is QLK.

Belongs to the insect chemoreceptor superfamily. Heteromeric odorant receptor channel (TC 1.A.69) family. Orco subfamily. Heterodimer with conventional odorant receptors (ORs). Complexes exist early in the endomembrane system in olfactory sensory neurons (OSNs), coupling these complexes to the conserved ciliary trafficking pathway. In terms of tissue distribution, found specifically within most antennal and maxillary palp sensilla, as well as in a subset of proboscis sensilla.

Its subcellular location is the cell membrane. In terms of biological role, odorant coreceptor which complexes with conventional odorant receptors (ORs) to form odorant-sensing units, providing sensitive and prolonged odorant signaling and calcium permeability. Orco is a universal and integral part of the functional odorant receptor, involved in the dendritic localization of other olfactory receptors. Plays a key role in preferred attraction of females for humans over non-human hosts for blood feeding. Human attraction plays a crucial role in the transmission of dengue and yellow fever by the mosquito. Also required for the response to the insect repellent IR3535; or to N,N-Diethyl-meta-toluamide (DEET), the most widely used insect repellent worldwide. The polypeptide is Odorant receptor coreceptor (SGPRor7) (Aedes aegypti (Yellowfever mosquito)).